The following is a 140-amino-acid chain: Large ribosomal subunit protein uL16 (140 aa).

The tract at residues 1-24 is disordered; that stretch reads MALAPARTKYRKSQKGSRAGNAKR.

The protein belongs to the universal ribosomal protein uL16 family. Part of the 50S ribosomal subunit.

Functionally, binds 23S rRNA and is also seen to make contacts with the A and possibly P site tRNAs. In Opitutus terrae (strain DSM 11246 / JCM 15787 / PB90-1), this protein is Large ribosomal subunit protein uL16.